A 156-amino-acid polypeptide reads, in one-letter code: ATP synthase subunit b 1 (156 aa).

A helical transmembrane segment spans residues 5-27 (FTLISQAMAFAIFIWFTVRFVWP).

This sequence belongs to the ATPase B chain family. In terms of assembly, F-type ATPases have 2 components, F(1) - the catalytic core - and F(0) - the membrane proton channel. F(1) has five subunits: alpha(3), beta(3), gamma(1), delta(1), epsilon(1). F(0) has three main subunits: a(1), b(2) and c(10-14). The alpha and beta chains form an alternating ring which encloses part of the gamma chain. F(1) is attached to F(0) by a central stalk formed by the gamma and epsilon chains, while a peripheral stalk is formed by the delta and b chains.

It localises to the cell inner membrane. Functionally, f(1)F(0) ATP synthase produces ATP from ADP in the presence of a proton or sodium gradient. F-type ATPases consist of two structural domains, F(1) containing the extramembraneous catalytic core and F(0) containing the membrane proton channel, linked together by a central stalk and a peripheral stalk. During catalysis, ATP synthesis in the catalytic domain of F(1) is coupled via a rotary mechanism of the central stalk subunits to proton translocation. Its function is as follows. Component of the F(0) channel, it forms part of the peripheral stalk, linking F(1) to F(0). The sequence is that of ATP synthase subunit b 1 from Nitrosospira multiformis (strain ATCC 25196 / NCIMB 11849 / C 71).